A 119-amino-acid chain; its full sequence is Phosphoribosyl-AMP cyclohydrolase (119 aa).

Asp77 is a Mg(2+) binding site. Cys78 is a binding site for Zn(2+). Mg(2+) is bound by residues Asp79 and Asp81. Cys94 and Cys101 together coordinate Zn(2+).

It belongs to the PRA-CH family. Homodimer. Mg(2+) is required as a cofactor. Requires Zn(2+) as cofactor.

The protein localises to the cytoplasm. It carries out the reaction 1-(5-phospho-beta-D-ribosyl)-5'-AMP + H2O = 1-(5-phospho-beta-D-ribosyl)-5-[(5-phospho-beta-D-ribosylamino)methylideneamino]imidazole-4-carboxamide. It participates in amino-acid biosynthesis; L-histidine biosynthesis; L-histidine from 5-phospho-alpha-D-ribose 1-diphosphate: step 3/9. Catalyzes the hydrolysis of the adenine ring of phosphoribosyl-AMP. The sequence is that of Phosphoribosyl-AMP cyclohydrolase from Ruegeria pomeroyi (strain ATCC 700808 / DSM 15171 / DSS-3) (Silicibacter pomeroyi).